The primary structure comprises 260 residues: uncharacterized protein (260 aa).

An N-terminal signal peptide occupies residues 1–22 (MGYSKRFALYISILILIVMVAG). C23 carries the N-palmitoyl cysteine lipid modification. Residue C23 is the site of S-diacylglycerol cysteine attachment.

Belongs to the staphylococcal tandem lipoprotein family.

The protein resides in the cell membrane. This is an uncharacterized protein from Staphylococcus aureus (strain N315).